Consider the following 367-residue polypeptide: 2-aminoethylphosphonate--pyruvate transaminase (367 aa).

Pyridoxal 5'-phosphate contacts are provided by residues S65–S67, Y92, T143, and D168. Position 194 is an N6-(pyridoxal phosphate)lysine (K194). T243 contributes to the pyridoxal 5'-phosphate binding site.

This sequence belongs to the class-V pyridoxal-phosphate-dependent aminotransferase family. PhnW subfamily. Homodimer. The cofactor is pyridoxal 5'-phosphate.

The catalysed reaction is (2-aminoethyl)phosphonate + pyruvate = phosphonoacetaldehyde + L-alanine. Its function is as follows. Involved in phosphonate degradation. This chain is 2-aminoethylphosphonate--pyruvate transaminase (phnW), found in Salmonella typhimurium (strain LT2 / SGSC1412 / ATCC 700720).